Here is a 335-residue protein sequence, read N- to C-terminus: Eukaryotic translation initiation factor 3 subunit H (335 aa).

Positions 22 to 156 (VQIDGMVVLK…LKAYRLTPKL (135 aa)) constitute an MPN domain. A compositionally biased stretch (low complexity) spans 254–263 (QQQKHQYTQR). Residues 254–287 (QQQKHQYTQRRQQENLQRQSRGETSLPEEDVNKL) form a disordered region. A compositionally biased stretch (polar residues) spans 267-276 (ENLQRQSRGE).

The protein belongs to the eIF-3 subunit H family. As to quaternary structure, component of the eukaryotic translation initiation factor 3 (eIF-3) complex, which is composed of 13 subunits: eif3a, eif3b, eif3c, eif3d, eif3e, eif3f, eif3g, eif3h, eif3i, eif3j, eif3k, eif3l and eif3m.

It localises to the cytoplasm. Functionally, component of the eukaryotic translation initiation factor 3 (eIF-3) complex, which is involved in protein synthesis of a specialized repertoire of mRNAs and, together with other initiation factors, stimulates binding of mRNA and methionyl-tRNAi to the 40S ribosome. The eIF-3 complex specifically targets and initiates translation of a subset of mRNAs involved in cell proliferation. The polypeptide is Eukaryotic translation initiation factor 3 subunit H (eif3h) (Xenopus tropicalis (Western clawed frog)).